Reading from the N-terminus, the 612-residue chain is Elongation factor 4 (612 aa).

One can recognise a tr-type G domain in the interval 11–193 (NHIRNFSIVA…KIVTDIPAPS (183 aa)). GTP contacts are provided by residues 23 to 28 (DHGKST) and 140 to 143 (NKID).

This sequence belongs to the TRAFAC class translation factor GTPase superfamily. Classic translation factor GTPase family. LepA subfamily.

The protein localises to the cell membrane. It catalyses the reaction GTP + H2O = GDP + phosphate + H(+). In terms of biological role, required for accurate and efficient protein synthesis under certain stress conditions. May act as a fidelity factor of the translation reaction, by catalyzing a one-codon backward translocation of tRNAs on improperly translocated ribosomes. Back-translocation proceeds from a post-translocation (POST) complex to a pre-translocation (PRE) complex, thus giving elongation factor G a second chance to translocate the tRNAs correctly. Binds to ribosomes in a GTP-dependent manner. This chain is Elongation factor 4, found in Lactobacillus acidophilus (strain ATCC 700396 / NCK56 / N2 / NCFM).